A 357-amino-acid polypeptide reads, in one-letter code: S-adenosylmethionine:tRNA ribosyltransferase-isomerase (357 aa).

The protein belongs to the QueA family. In terms of assembly, monomer.

It is found in the cytoplasm. It carries out the reaction 7-aminomethyl-7-carbaguanosine(34) in tRNA + S-adenosyl-L-methionine = epoxyqueuosine(34) in tRNA + adenine + L-methionine + 2 H(+). It participates in tRNA modification; tRNA-queuosine biosynthesis. Functionally, transfers and isomerizes the ribose moiety from AdoMet to the 7-aminomethyl group of 7-deazaguanine (preQ1-tRNA) to give epoxyqueuosine (oQ-tRNA). The polypeptide is S-adenosylmethionine:tRNA ribosyltransferase-isomerase (Proteus mirabilis (strain HI4320)).